A 310-amino-acid polypeptide reads, in one-letter code: Putative S-adenosyl-L-methionine-dependent methyltransferase MSMEG_1888/MSMEI_1848 (310 aa).

S-adenosyl-L-methionine is bound by residues Asp128 and 157-158 (DL).

The protein belongs to the UPF0677 family.

Its function is as follows. Exhibits S-adenosyl-L-methionine-dependent methyltransferase activity. The polypeptide is Putative S-adenosyl-L-methionine-dependent methyltransferase MSMEG_1888/MSMEI_1848 (Mycolicibacterium smegmatis (strain ATCC 700084 / mc(2)155) (Mycobacterium smegmatis)).